The following is a 182-amino-acid chain: Ribosome-recycling factor (182 aa).

The protein belongs to the RRF family.

Its subcellular location is the cytoplasm. Responsible for the release of ribosomes from messenger RNA at the termination of protein biosynthesis. May increase the efficiency of translation by recycling ribosomes from one round of translation to another. The polypeptide is Ribosome-recycling factor (Nostoc punctiforme (strain ATCC 29133 / PCC 73102)).